The sequence spans 217 residues: Protein canopy 4 (217 aa).

The signal sequence occupies residues 1–27 (MEMFTVFLFYMFSLVLANQEERLPNKC). 3 disulfides stabilise this stretch: C27-C185, C30-C173, and C83-C145. The disordered stretch occupies residues 194–217 (MGMKGSEEESEGKDGKETHDAGEL). Residues 205-217 (GKDGKETHDAGEL) are compositionally biased toward basic and acidic residues.

Belongs to the canopy family.

The protein localises to the secreted. This chain is Protein canopy 4 (cnpy4), found in Danio rerio (Zebrafish).